Consider the following 613-residue polypeptide: Cysteine--tRNA ligase (613 aa).

The tract at residues 1–130 is disordered; it reads MSAGAGTPRR…TRGGVARSGN (130 aa). Repeat copies occupy residues 36-49, 50-63, 64-77, 78-91, 92-105, and 106-119. Positions 36–119 are 6 X 14 AA tandem repeats of P-[TA]-R-G-D-K-K-R-A-[RP]-R-[PL]-G-V; the sequence is PTRGDKKRAR…DKKRARRPGV (84 aa). The cysteinyl-tRNA synthetase stretch occupies residues 148–613; sequence VTIRLYDTSA…QGPRWSLGSR (466 aa). Cys176 is a Zn(2+) binding site. The 'HIGH' region signature appears at 178–188; sequence ATVQAAPHIGH. Positions 355, 380, and 384 each coordinate Zn(2+). The short motif at 411 to 415 is the 'KMSKS' region element; it reads KMSKS. Lys414 provides a ligand contact to ATP.

It belongs to the class-I aminoacyl-tRNA synthetase family. In terms of assembly, monomer. The cofactor is Zn(2+).

It localises to the cytoplasm. The enzyme catalyses tRNA(Cys) + L-cysteine + ATP = L-cysteinyl-tRNA(Cys) + AMP + diphosphate. The polypeptide is Cysteine--tRNA ligase (Streptomyces coelicolor (strain ATCC BAA-471 / A3(2) / M145)).